The sequence spans 80 residues: MAFLKKSLFLVLFLGIVSLSICEEEKREGEEEEKQEEENEELSEEELRDRRAWLDKLKSLGKVVGKVGLGVVQNYLNPRQ.

A signal peptide spans 1–22; sequence MAFLKKSLFLVLFLGIVSLSIC. A propeptide spanning residues 23 to 49 is cleaved from the precursor; the sequence is EEEKREGEEEEKQEEENEELSEEELRD.

Belongs to the frog skin active peptide (FSAP) family. Dermaseptin subfamily. As to expression, expressed by the skin glands.

The protein localises to the secreted. In terms of biological role, has antibacterial activity. This is Raniseptin-4 from Boana raniceps (Chaco tree frog).